Here is a 473-residue protein sequence, read N- to C-terminus: Photosystem II CP43 reaction center protein (473 aa).

Positions 1-14 (MKTLYSLRRFYPVE) are excised as a propeptide. Thr15 carries the post-translational modification N-acetylthreonine. Phosphothreonine is present on Thr15. 5 helical membrane-spanning segments follow: residues 69 to 93 (LFEV…PHLA), 134 to 155 (LLGP…KDRN), 178 to 200 (KALY…RKIT), 255 to 275 (KPFA…LSYS), and 291 to 312 (WFNN…ASQA). A [CaMn4O5] cluster-binding site is contributed by Glu367. Residues 447 to 471 (RARAAAAGFEKGIDRDLEPVLSMTP) form a helical membrane-spanning segment.

It belongs to the PsbB/PsbC family. PsbC subfamily. PSII is composed of 1 copy each of membrane proteins PsbA, PsbB, PsbC, PsbD, PsbE, PsbF, PsbH, PsbI, PsbJ, PsbK, PsbL, PsbM, PsbT, PsbX, PsbY, PsbZ, Psb30/Ycf12, at least 3 peripheral proteins of the oxygen-evolving complex and a large number of cofactors. It forms dimeric complexes. Binds multiple chlorophylls and provides some of the ligands for the Ca-4Mn-5O cluster of the oxygen-evolving complex. It may also provide a ligand for a Cl- that is required for oxygen evolution. PSII binds additional chlorophylls, carotenoids and specific lipids. is required as a cofactor.

The protein resides in the plastid. The protein localises to the chloroplast thylakoid membrane. In terms of biological role, one of the components of the core complex of photosystem II (PSII). It binds chlorophyll and helps catalyze the primary light-induced photochemical processes of PSII. PSII is a light-driven water:plastoquinone oxidoreductase, using light energy to abstract electrons from H(2)O, generating O(2) and a proton gradient subsequently used for ATP formation. The protein is Photosystem II CP43 reaction center protein of Phalaenopsis aphrodite subsp. formosana (Moth orchid).